We begin with the raw amino-acid sequence, 378 residues long: Quinolinate synthase (378 aa).

The iminosuccinate site is built by His59 and Ser80. Cys125 is a [4Fe-4S] cluster binding site. Iminosuccinate-binding positions include 151–153 (YAN) and Ser168. Residue Cys212 coordinates [4Fe-4S] cluster. Residues 238–240 (HPE) and Thr255 contribute to the iminosuccinate site. Cys309 is a binding site for [4Fe-4S] cluster.

Belongs to the quinolinate synthase family. Type 1 subfamily. Requires [4Fe-4S] cluster as cofactor.

It is found in the cytoplasm. It catalyses the reaction iminosuccinate + dihydroxyacetone phosphate = quinolinate + phosphate + 2 H2O + H(+). Its pathway is cofactor biosynthesis; NAD(+) biosynthesis; quinolinate from iminoaspartate: step 1/1. Functionally, catalyzes the condensation of iminoaspartate with dihydroxyacetone phosphate to form quinolinate. This chain is Quinolinate synthase, found in Burkholderia mallei (strain NCTC 10247).